The sequence spans 308 residues: N-acetyl-gamma-glutamyl-phosphate reductase (308 aa).

Cys117 is a catalytic residue.

Belongs to the NAGSA dehydrogenase family. Type 2 subfamily.

Its subcellular location is the cytoplasm. It catalyses the reaction N-acetyl-L-glutamate 5-semialdehyde + phosphate + NADP(+) = N-acetyl-L-glutamyl 5-phosphate + NADPH + H(+). The protein operates within amino-acid biosynthesis; L-arginine biosynthesis; N(2)-acetyl-L-ornithine from L-glutamate: step 3/4. In terms of biological role, catalyzes the NADPH-dependent reduction of N-acetyl-5-glutamyl phosphate to yield N-acetyl-L-glutamate 5-semialdehyde. This is N-acetyl-gamma-glutamyl-phosphate reductase from Sinorhizobium fredii (strain NBRC 101917 / NGR234).